The sequence spans 248 residues: MTEGAKSTIDQGEVDRFSAMAAEWWSPTGKFKPLHKFNPVRLAYIRDKACENFSRDPKSARPLEGLRVLDIGCGGGLLSEPVARMGASVVGADPSEKNIGIASTHAKASGVSVDYRAVTAEGLAEAGETFDIVLNMEVVEHVADVEFFMTTCAKMVRPGGLIFVATINRTMKAAALAIFAAENILRWLPRGTHQYEKLVRPEELEEPLVASGLEITDRTGVSFNPLSNQWNLSKDMDVNYMLLAKRPT.

S-adenosyl-L-methionine-binding residues include Arg41, Gly72, Asp93, and Met136.

The protein belongs to the methyltransferase superfamily. UbiG/COQ3 family.

It catalyses the reaction a 3-demethylubiquinol + S-adenosyl-L-methionine = a ubiquinol + S-adenosyl-L-homocysteine + H(+). The enzyme catalyses a 3-(all-trans-polyprenyl)benzene-1,2-diol + S-adenosyl-L-methionine = a 2-methoxy-6-(all-trans-polyprenyl)phenol + S-adenosyl-L-homocysteine + H(+). Its pathway is cofactor biosynthesis; ubiquinone biosynthesis. O-methyltransferase that catalyzes the 2 O-methylation steps in the ubiquinone biosynthetic pathway. The sequence is that of Ubiquinone biosynthesis O-methyltransferase from Rhizobium johnstonii (strain DSM 114642 / LMG 32736 / 3841) (Rhizobium leguminosarum bv. viciae).